The following is a 110-amino-acid chain: uncharacterized protein (110 aa).

To M.jannaschii MJ0123 and MJ1213.

This is an uncharacterized protein from Aquifex aeolicus (strain VF5).